We begin with the raw amino-acid sequence, 1048 residues long: Transcription factor mef2A (1048 aa).

The MADS-box domain occupies 1–61 (MGRNKITIEK…NKLFQYSSRD (61 aa)). The segment covering 74 to 85 (DNTRKNLTNQDY) has biased composition (polar residues). Disordered stretches follow at residues 74 to 263 (DNTR…QAAQ), 294 to 339 (QQQH…QQQQ), 386 to 812 (GIYG…NINT), and 916 to 1048 (LLLT…EPKN). The segment covering 97-110 (DDEDGDDDGDEDLG) has biased composition (acidic residues). Composition is skewed to low complexity over residues 130-205 (NNNN…NANH), 212-263 (GNSA…QAAQ), 294-303 (QQQHQQQQQN), 327-339 (QQQQ…QQQQ), 393-437 (PPQM…IMNK), 446-466 (YYDY…NSNG), and 481-500 (QQQS…HQSP). Positions 249–304 (NNNSNGYQQQQQAAQQAVQQAQMAQQMHLQQQQQYQQLQHIQQQQQQQHQQQQQNM) form a coiled coil. Positions 506–522 (YSPQQQSPVLNSQNGHH) are enriched in polar residues. The span at 529 to 539 (HQMHHQQHQHQ) shows a compositional bias: basic residues. The segment covering 540 to 593 (QHPQMQQQQQQQQQHQQHPQMQQIQQQQHPQMQQHQQHQQQHPQMQQQHMNNHQ) has biased composition (low complexity). Positions 600–618 (NSSPEINSQKNVHSSPLIM) are enriched in polar residues. A compositionally biased stretch (low complexity) spans 619–699 (NSNNNNNNNN…NSNNGNNNNN (81 aa)). Positions 715 to 736 (SSPTIPEQPSINVSTSSNSAHV) are enriched in polar residues. Low complexity-rich tracts occupy residues 738–802 (NNIT…SSST), 924–960 (SNNS…SSSS), and 982–1029 (NNNN…NNSN).

The protein resides in the nucleus. In terms of biological role, transcription factor that regulates cell differentiation during development. Seems to negatively regulate prestalk gene expression and positively regulate prespore gene expression. This chain is Transcription factor mef2A (mef2A), found in Dictyostelium discoideum (Social amoeba).